A 477-amino-acid chain; its full sequence is MTTSSNPPNSAAPNQTSGMWGGRFSEATDAFVAEFTASVQFDQRFYKQDIAGSIAHATMLAKVGVLTEAERDDIIEGLSTIRAEIEAGTFEWRIDLEDVHMNIESRLTQRIGITGKKLHTGRSRNDQVATDIRLYLRDEIDDILGLLERLQKGLLGLAAKNVNTIMPGFTHLQTAQPVTFGHHLLAWFEMLVRDTERLQDCRKRVNRMPLGSAALAGTTYPIDRAYTAELLGFEAVSENSLDAVSDRDFAIEFNAAASLIMMHLSRMSEELILWTSAQFKFVNIPDRFCTGSSIMPQKKNPDVPELIRGKSGRVFGDLVSLLTLMKGQPLAYNKDNQEDKEPLFDAIDTVRGSLMAFADMIPALVPNVEIMREAALRGFSTATDLADYLVKKGVAFRDAHEIVGKAVALGVAEEKDLSELTLEQLQQFSDLITADVFDKALTLEASVNARDHIGGTSPKQVEAAIARAHKRLEQLYA.

The protein belongs to the lyase 1 family. Argininosuccinate lyase subfamily.

Its subcellular location is the cytoplasm. The enzyme catalyses 2-(N(omega)-L-arginino)succinate = fumarate + L-arginine. The protein operates within amino-acid biosynthesis; L-arginine biosynthesis; L-arginine from L-ornithine and carbamoyl phosphate: step 3/3. The polypeptide is Argininosuccinate lyase (Acinetobacter baumannii (strain AB307-0294)).